Consider the following 259-residue polypeptide: Protein LEAD-SENSITIVE 1 (259 aa).

The LRAT domain occupies 20–168 (YSWRTAYIYA…CKTALLVLEG (149 aa)). Residues His30 and His42 contribute to the active site. The Acyl-thioester intermediate role is filled by Cys152.

As to expression, highly expressed in inflorescences, siliques and stems, and, to a lower extent, in roots and leaves.

It localises to the cytoplasm. Confers tolerance to lead ions (Pb) stress mediated by Pb(NO(3))(2) probably by promoting Pb accumulation leading to subsequent glutathione-dependent phytochelatin (PC) synthesis and related gene expression, including PDR12/ABCG40, GSH1, GSH2, GR1, GR2, PCS1 and PCS2. The polypeptide is Protein LEAD-SENSITIVE 1 (Arabidopsis thaliana (Mouse-ear cress)).